Here is a 492-residue protein sequence, read N- to C-terminus: Probable cytochrome P450 516B1 (492 aa).

The helical transmembrane segment at methionine 1–histidine 17 threads the bilayer. Cysteine 438 lines the heme pocket.

Belongs to the cytochrome P450 family. It depends on heme as a cofactor.

It localises to the membrane. The sequence is that of Probable cytochrome P450 516B1 (cyp516B1) from Dictyostelium discoideum (Social amoeba).